Here is a 432-residue protein sequence, read N- to C-terminus: UPF0597 protein APJL_1638 (432 aa).

The protein belongs to the UPF0597 family.

In Actinobacillus pleuropneumoniae serotype 3 (strain JL03), this protein is UPF0597 protein APJL_1638.